Here is a 412-residue protein sequence, read N- to C-terminus: Alanyl-tRNA editing protein Aarsd1 (412 aa).

Residues His-109 and His-113 each coordinate Zn(2+). A Phosphoserine modification is found at Ser-174. Residues Cys-209 and His-213 each coordinate Zn(2+).

This sequence belongs to the class-II aminoacyl-tRNA synthetase family. Alax-L subfamily. Requires Zn(2+) as cofactor.

It localises to the cytoplasm. Functions in trans to edit the amino acid moiety from incorrectly charged tRNA(Ala). In Rattus norvegicus (Rat), this protein is Alanyl-tRNA editing protein Aarsd1 (Aarsd1).